Reading from the N-terminus, the 266-residue chain is Family of serine hydrolases 3 (266 aa).

Residues S117, D180, and H209 each act as charge relay system in the active site.

Belongs to the AB hydrolase 3 family.

Serine hydrolase of unknown specificity. The chain is Family of serine hydrolases 3 (FSH3) from Saccharomyces cerevisiae (strain ATCC 204508 / S288c) (Baker's yeast).